Here is a 453-residue protein sequence, read N- to C-terminus: Cytochrome b-c1 complex subunit 2, mitochondrial (453 aa).

The transit peptide at 1 to 14 (MKLLTRAGSLSRFY) directs the protein to the mitochondrion. 3 positions are modified to N6-acetyllysine: lysine 66, lysine 199, and lysine 250.

Belongs to the peptidase M16 family. UQCRC2/QCR2 subfamily. In terms of assembly, component of the ubiquinol-cytochrome c oxidoreductase (cytochrome b-c1 complex, complex III, CIII), a multisubunit enzyme composed of 11 subunits. The complex is composed of 3 respiratory subunits cytochrome b, cytochrome c1 and Rieske protein UQCRFS1, 2 core protein subunits UQCRC1/QCR1 and UQCRC2/QCR2, and 6 low-molecular weight protein subunits UQCRH/QCR6, UQCRB/QCR7, UQCRQ/QCR8, UQCR10/QCR9, UQCR11/QCR10 and subunit 9, the cleavage product of Rieske protein UQCRFS1. The complex exists as an obligatory dimer and forms supercomplexes (SCs) in the inner mitochondrial membrane with NADH-ubiquinone oxidoreductase (complex I, CI) and cytochrome c oxidase (complex IV, CIV), resulting in different assemblies (supercomplex SCI(1)III(2)IV(1) and megacomplex MCI(2)III(2)IV(2)). Interacts with RAB5IF. Interacts with STMP1.

The protein localises to the mitochondrion inner membrane. Component of the ubiquinol-cytochrome c oxidoreductase, a multisubunit transmembrane complex that is part of the mitochondrial electron transport chain which drives oxidative phosphorylation. The respiratory chain contains 3 multisubunit complexes succinate dehydrogenase (complex II, CII), ubiquinol-cytochrome c oxidoreductase (cytochrome b-c1 complex, complex III, CIII) and cytochrome c oxidase (complex IV, CIV), that cooperate to transfer electrons derived from NADH and succinate to molecular oxygen, creating an electrochemical gradient over the inner membrane that drives transmembrane transport and the ATP synthase. The cytochrome b-c1 complex catalyzes electron transfer from ubiquinol to cytochrome c, linking this redox reaction to translocation of protons across the mitochondrial inner membrane, with protons being carried across the membrane as hydrogens on the quinol. In the process called Q cycle, 2 protons are consumed from the matrix, 4 protons are released into the intermembrane space and 2 electrons are passed to cytochrome c. The 2 core subunits UQCRC1/QCR1 and UQCRC2/QCR2 are homologous to the 2 mitochondrial-processing peptidase (MPP) subunits beta-MPP and alpha-MPP respectively, and they seem to have preserved their MPP processing properties. May be involved in the in situ processing of UQCRFS1 into the mature Rieske protein and its mitochondrial targeting sequence (MTS)/subunit 9 when incorporated into complex III. The polypeptide is Cytochrome b-c1 complex subunit 2, mitochondrial (UQCRC2) (Bos taurus (Bovine)).